Here is a 286-residue protein sequence, read N- to C-terminus: 2-hydroxy-6-oxononadienedioate/2-hydroxy-6-oxononatrienedioate hydrolase (286 aa).

The AB hydrolase-1 domain maps to 36–271; sequence VIMLHGGGPG…RCGHWAQWEH (236 aa). His-265 acts as the Proton acceptor in catalysis.

The protein belongs to the AB hydrolase superfamily. BphD family. Homodimer.

The catalysed reaction is (2Z,4E)-2-hydroxy-6-oxonona-2,4-dienedioate + H2O = (2Z)-2-hydroxypenta-2,4-dienoate + succinate + H(+). It catalyses the reaction (2Z,4E,7E)-2-hydroxy-6-oxonona-2,4,7-trienedioate + H2O = (2Z)-2-hydroxypenta-2,4-dienoate + fumarate + H(+). Its pathway is aromatic compound metabolism; 3-phenylpropanoate degradation. Its function is as follows. Catalyzes the cleavage of the C5-C6 bond of 2-hydroxy-6-oxononadienedioate, and probably also 2-hydroxy-6-oxononatrienedioate, a dienol ring fission product of the bacterial meta-cleavage pathway for degradation of phenylpropionic acid. This is 2-hydroxy-6-oxononadienedioate/2-hydroxy-6-oxononatrienedioate hydrolase (mhpC) from Comamonas testosteroni (Pseudomonas testosteroni).